Here is a 902-residue protein sequence, read N- to C-terminus: Translation initiation factor IF-2 (902 aa).

The segment covering 137–177 (NLDEQQRLAESDRARDEAIQRKRDEEQAAKDRVEAERKAAE) has biased composition (basic and acidic residues). Disordered regions lie at residues 137 to 248 (NLDE…SHVM) and 266 to 314 (HLSA…ERPT). Composition is skewed to low complexity over residues 178 to 229 (EAAA…ATPA) and 279 to 291 (RGKP…SSSS). Residues 401–570 (SRPPVVTIMG…SLQAEVLELK (170 aa)) form the tr-type G domain. The interval 410 to 417 (GHVDHGKT) is G1. 410 to 417 (GHVDHGKT) is a GTP binding site. Residues 435–439 (GITQH) are G2. Residues 456–459 (DTPG) form a G3 region. Residues 456–460 (DTPGH) and 510–513 (NKID) contribute to the GTP site. The interval 510–513 (NKID) is G4. The interval 546–548 (SAK) is G5.

Belongs to the TRAFAC class translation factor GTPase superfamily. Classic translation factor GTPase family. IF-2 subfamily.

It localises to the cytoplasm. Its function is as follows. One of the essential components for the initiation of protein synthesis. Protects formylmethionyl-tRNA from spontaneous hydrolysis and promotes its binding to the 30S ribosomal subunits. Also involved in the hydrolysis of GTP during the formation of the 70S ribosomal complex. The sequence is that of Translation initiation factor IF-2 from Xanthomonas campestris pv. campestris (strain 8004).